Here is a 1412-residue protein sequence, read N- to C-terminus: DNA-directed RNA polymerase subunit beta' (1412 aa).

The Zn(2+) site is built by cysteine 70, cysteine 72, cysteine 85, and cysteine 88. Residues aspartate 460, aspartate 462, and aspartate 464 each contribute to the Mg(2+) site. Residues cysteine 814, cysteine 888, cysteine 895, and cysteine 898 each contribute to the Zn(2+) site. The segment at glutamate 1378–glutamate 1412 is disordered.

This sequence belongs to the RNA polymerase beta' chain family. The RNAP catalytic core consists of 2 alpha, 1 beta, 1 beta' and 1 omega subunit. When a sigma factor is associated with the core the holoenzyme is formed, which can initiate transcription. The cofactor is Mg(2+). Zn(2+) is required as a cofactor.

It carries out the reaction RNA(n) + a ribonucleoside 5'-triphosphate = RNA(n+1) + diphosphate. Its function is as follows. DNA-dependent RNA polymerase catalyzes the transcription of DNA into RNA using the four ribonucleoside triphosphates as substrates. This Bordetella petrii (strain ATCC BAA-461 / DSM 12804 / CCUG 43448) protein is DNA-directed RNA polymerase subunit beta'.